The chain runs to 201 residues: Cell division protein SepF (201 aa).

Residues 1–94 form a disordered region; sequence MALKDLFSGF…TTSKNNARNV (94 aa). Positions 13–28 are enriched in acidic residues; that stretch reads VEEEDDELEAPPEENE. The segment covering 35-44 has biased composition (low complexity); it reads PKQQAQSQNQ. Residues 59 to 88 show a composition bias toward polar residues; it reads SIQSVPKKQSTRLQQSSGERKYQMNNTTSK.

Belongs to the SepF family. Homodimer. Interacts with FtsZ.

It localises to the cytoplasm. Its function is as follows. Cell division protein that is part of the divisome complex and is recruited early to the Z-ring. Probably stimulates Z-ring formation, perhaps through the cross-linking of FtsZ protofilaments. Its function overlaps with FtsA. This chain is Cell division protein SepF, found in Staphylococcus saprophyticus subsp. saprophyticus (strain ATCC 15305 / DSM 20229 / NCIMB 8711 / NCTC 7292 / S-41).